A 410-amino-acid chain; its full sequence is Peptidase T (410 aa).

His-79 is a Zn(2+) binding site. The active site involves Asp-81. Asp-142 lines the Zn(2+) pocket. The active-site Proton acceptor is Glu-176. Residues Glu-177, Asp-199, and His-381 each coordinate Zn(2+).

Belongs to the peptidase M20B family. The cofactor is Zn(2+).

It localises to the cytoplasm. It catalyses the reaction Release of the N-terminal residue from a tripeptide.. Cleaves the N-terminal amino acid of tripeptides. The chain is Peptidase T from Bacillus cereus (strain B4264).